A 122-amino-acid chain; its full sequence is Large ribosomal subunit protein bL12 (122 aa).

The protein belongs to the bacterial ribosomal protein bL12 family. As to quaternary structure, homodimer. Part of the ribosomal stalk of the 50S ribosomal subunit. Forms a multimeric L10(L12)X complex, where L10 forms an elongated spine to which 2 to 4 L12 dimers bind in a sequential fashion. Binds GTP-bound translation factors.

Its function is as follows. Forms part of the ribosomal stalk which helps the ribosome interact with GTP-bound translation factors. Is thus essential for accurate translation. This chain is Large ribosomal subunit protein bL12, found in Mesoplasma florum (strain ATCC 33453 / NBRC 100688 / NCTC 11704 / L1) (Acholeplasma florum).